The primary structure comprises 321 residues: Phosphatidylglycerol phospholipase C (321 aa).

The GP-PDE domain maps to 2–251; the sequence is VEIVGHRAFK…DDPIKARKLC (250 aa). Residues 297–315 form a helical; Anchor for type IV membrane protein membrane-spanning segment; that stretch reads WVHIKLCGWSIAYVIFLFL.

The protein belongs to the glycerophosphoryl diester phosphodiesterase family.

Its subcellular location is the mitochondrion membrane. It localises to the lipid droplet. The catalysed reaction is a 1,2-diacyl-sn-glycero-3-phospho-(1'-sn-glycerol) + H2O = sn-glycerol 3-phosphate + a 1,2-diacyl-sn-glycerol + H(+). In terms of biological role, phosphatidylglycerol phospholipase required for the removal of excess phosphatidylglycerol (PG) via a phospholipase C-type degradation mechanism. This Saccharomyces cerevisiae (strain ATCC 204508 / S288c) (Baker's yeast) protein is Phosphatidylglycerol phospholipase C (PGC1).